Reading from the N-terminus, the 433-residue chain is Type I acyl-CoA thioesterase mpaH (433 aa).

The interval 58–246 (HGVGLPKELY…IKARFGTTAD (189 aa)) is abhydrolase domain. Substrate is bound at residue V60. Catalysis depends on S139, which acts as the Nucleophile. A substrate-binding site is contributed by F140. Catalysis depends on residues D163 and H365.

It belongs to the AB hydrolase superfamily. MpaH hydrolase family. In terms of assembly, homodimer.

It localises to the peroxisome matrix. It catalyses the reaction mycophenolyl-CoA + H2O = mycophenolate + CoA + H(+). Its pathway is secondary metabolite biosynthesis; terpenoid biosynthesis. In terms of biological role, type I acyl-CoA thioesterase; part of the gene cluster that mediates the biosynthesis of mycophenolic acid (MPA), the first isolated antibiotic natural product in the world obtained from a culture of Penicillium brevicompactum in 1893. MpaH acts as a peroxisomal acyl-CoA hydrolase that converts MPA-CoA into the final product MPA. The first step of the pathway is the synthesis of 5-methylorsellinic acid (5MOA) by the cytosolic polyketide synthase mpaC. 5MOA is then converted to the phthalide compound 5,7-dihydroxy-4,6-dimethylphthalide (DHMP) by the endoplasmic reticulum-bound cytochrome P450 monooxygenase mpaDE. MpaDE first catalyzes hydroxylation of 5-MOA to 4,6-dihydroxy-2-(hydroxymethyl)-3-methylbenzoic acid (DHMB). MpaDE then acts as a lactone synthase that catalyzes the ring closure to convert DHMB into DHMP. The next step is the prenylation of DHMP by the Golgi apparatus-associated prenyltransferase mpaA to yield farnesyl-DHMP (FDHMP). The ER-bound oxygenase mpaB then mediates the oxidative cleavage the C19-C20 double bond in FDHMP to yield FDHMP-3C via a mycophenolic aldehyde intermediate. The O-methyltransferase mpaG catalyzes the methylation of FDHMP-3C to yield MFDHMP-3C. After the cytosolic methylation of FDHMP-3C, MFDHMP-3C enters into peroxisomes probably via free diffusion due to its low molecular weight. Upon a peroxisomal CoA ligation reaction, catalyzed by a beta-oxidation component enzyme acyl-CoA ligase ACL891, MFDHMP-3C-CoA would then be restricted to peroxisomes for the following beta-oxidation pathway steps. The peroxisomal beta-oxidation machinery than converts MFDHMP-3C-CoA into MPA_CoA, via a beta-oxidation chain-shortening process. Finally mpaH acts as a peroxisomal acyl-CoA hydrolase with high substrate specificity toward MPA-CoA to release the final product MPA. The chain is Type I acyl-CoA thioesterase mpaH from Penicillium brevicompactum.